An 872-amino-acid chain; its full sequence is G-type lectin S-receptor-like serine/threonine-protein kinase At5g24080 (872 aa).

The first 25 residues, 1–25 (MSSFHFYFPSVGLFSFFCFFLVSLA), serve as a signal peptide directing secretion. Topologically, residues 26–472 (TEPHIGLGSK…SRKSHGLRQK (447 aa)) are extracellular. A Bulb-type lectin domain is found at 30 to 149 (IGLGSKLKAS…EVTAGPTIWQ (120 aa)). N-linked (GlcNAc...) asparagine glycosylation is found at N49, N117, N208, N219, N261, and N294. The region spanning 306–344 (VSNPCDIAGICGNGVCNLDRTKKNADCLCLPGSVKLPDQ) is the EGF-like; atypical domain. Cystine bridges form between C310-C321 and C316-C332. N-linked (GlcNAc...) asparagine glycans are attached at residues N353, N367, and N390. The 88-residue stretch at 360–447 (CESNINRNGS…PGSTLFVKTR (88 aa)) folds into the PAN domain. 2 disulfide bridges follow: C400-C424 and C404-C410. N-linked (GlcNAc...) asparagine glycosylation is found at N449 and N459. Residues 473-493 (VLVIPIVVGMLVLVALLGMLL) form a helical membrane-spanning segment. Residues 494 to 872 (YYNLDRKRTL…TCSYSSMSPR (379 aa)) lie on the Cytoplasmic side of the membrane. T521 bears the Phosphothreonine mark. Residues 530–810 (NNFSQLLGSG…LEGTSDEINL (281 aa)) enclose the Protein kinase domain. ATP is bound by residues 536–544 (LGSGGFGTV) and K558. Y603 carries the post-translational modification Phosphotyrosine. The segment at 619–637 (EQTANLLDWRTRFEIAVAT) is caM-binding. D656 (proton acceptor) is an active-site residue. 2 positions are modified to phosphothreonine: T690 and T695.

This sequence belongs to the protein kinase superfamily. Ser/Thr protein kinase family.

The protein resides in the cell membrane. It carries out the reaction L-seryl-[protein] + ATP = O-phospho-L-seryl-[protein] + ADP + H(+). The enzyme catalyses L-threonyl-[protein] + ATP = O-phospho-L-threonyl-[protein] + ADP + H(+). This chain is G-type lectin S-receptor-like serine/threonine-protein kinase At5g24080, found in Arabidopsis thaliana (Mouse-ear cress).